Consider the following 406-residue polypeptide: Peptidase T (406 aa).

His-82 contributes to the Zn(2+) binding site. Residue Asp-84 is part of the active site. Asp-142 contacts Zn(2+). Glu-176 serves as the catalytic Proton acceptor. Positions 177, 199, and 381 each coordinate Zn(2+).

The protein belongs to the peptidase M20B family. Zn(2+) is required as a cofactor.

The protein resides in the cytoplasm. The enzyme catalyses Release of the N-terminal residue from a tripeptide.. In terms of biological role, cleaves the N-terminal amino acid of tripeptides. This Streptococcus agalactiae serotype III (strain NEM316) protein is Peptidase T.